The sequence spans 214 residues: Putative ras-related protein Rab-5B (214 aa).

Residue 56 to 63 coordinates GTP; that stretch reads GEMNTGKT. The short motif at 77–85 is the Effector region element; that stretch reads TDSTIGAAF. Residues 103–107 and 161–164 contribute to the GTP site; these read DTAGQ and NKVD.

It belongs to the small GTPase superfamily. Rab family. In terms of processing, this sequence lacks the C-terminal cysteine motifs subject to isoprenylation in other Rab proteins.

The chain is Putative ras-related protein Rab-5B (rab5B) from Dictyostelium discoideum (Social amoeba).